The chain runs to 347 residues: Probable replication factor C subunit 3 (347 aa).

Belongs to the activator 1 small subunits family. Heteropentamer of various rfc subunits that forms a complex (RFC) with PCNA in the presence of ATP.

The protein resides in the nucleus. Functionally, the elongation of primed DNA templates by DNA polymerase delta and epsilon requires the action of the accessory proteins PCNA and activator 1. This is Probable replication factor C subunit 3 (rfc3) from Dictyostelium discoideum (Social amoeba).